The following is a 353-amino-acid chain: Photosystem II D2 protein (353 aa).

Thr-2 is subject to N-acetylthreonine. Thr-2 is modified (phosphothreonine). A helical membrane pass occupies residues 41–61; that stretch reads CAYFSLGGWLTGTTFVTSWYT. Chlorophyll a is bound at residue His-118. Residues 125–141 form a helical membrane-spanning segment; sequence GFMLRQFELARSVQLRP. 2 residues coordinate pheophytin a: Gln-130 and Asn-143. A helical membrane pass occupies residues 153–166; that stretch reads VFVSVFLIYPLGQS. His-198 contacts chlorophyll a. The helical transmembrane segment at 208–228 threads the bilayer; that stretch reads AALLCAIHGATVENTLFEDGD. A plastoquinone-binding residues include His-215 and Phe-262. Residue His-215 coordinates Fe cation. His-269 serves as a coordination point for Fe cation. Residues 279–295 traverse the membrane as a helical segment; that stretch reads GLWMSAIGVVGLALNLR.

Belongs to the reaction center PufL/M/PsbA/D family. PSII is composed of 1 copy each of membrane proteins PsbA, PsbB, PsbC, PsbD, PsbE, PsbF, PsbH, PsbI, PsbJ, PsbK, PsbL, PsbM, PsbT, PsbX, PsbY, PsbZ, Psb30/Ycf12, at least 3 peripheral proteins of the oxygen-evolving complex and a large number of cofactors. It forms dimeric complexes. It depends on The D1/D2 heterodimer binds P680, chlorophylls that are the primary electron donor of PSII, and subsequent electron acceptors. It shares a non-heme iron and each subunit binds pheophytin, quinone, additional chlorophylls, carotenoids and lipids. There is also a Cl(-1) ion associated with D1 and D2, which is required for oxygen evolution. The PSII complex binds additional chlorophylls, carotenoids and specific lipids. as a cofactor.

The protein localises to the plastid. It localises to the chloroplast thylakoid membrane. It carries out the reaction 2 a plastoquinone + 4 hnu + 2 H2O = 2 a plastoquinol + O2. Its function is as follows. Photosystem II (PSII) is a light-driven water:plastoquinone oxidoreductase that uses light energy to abstract electrons from H(2)O, generating O(2) and a proton gradient subsequently used for ATP formation. It consists of a core antenna complex that captures photons, and an electron transfer chain that converts photonic excitation into a charge separation. The D1/D2 (PsbA/PsbD) reaction center heterodimer binds P680, the primary electron donor of PSII as well as several subsequent electron acceptors. D2 is needed for assembly of a stable PSII complex. The sequence is that of Photosystem II D2 protein from Chara vulgaris (Common stonewort).